The primary structure comprises 279 residues: Energy-coupling factor transporter ATP-binding protein EcfA1 (279 aa).

The 235-residue stretch at 6–240 (VEFRNVSFRY…KDALREIGLD (235 aa)) folds into the ABC transporter domain. ATP is bound at residue 40–47 (GHNGSGKS).

This sequence belongs to the ABC transporter superfamily. Energy-coupling factor EcfA family. Forms a stable energy-coupling factor (ECF) transporter complex composed of 2 membrane-embedded substrate-binding proteins (S component), 2 ATP-binding proteins (A component) and 2 transmembrane proteins (T component).

It is found in the cell membrane. Its function is as follows. ATP-binding (A) component of a common energy-coupling factor (ECF) ABC-transporter complex. Unlike classic ABC transporters this ECF transporter provides the energy necessary to transport a number of different substrates. The protein is Energy-coupling factor transporter ATP-binding protein EcfA1 of Oceanobacillus iheyensis (strain DSM 14371 / CIP 107618 / JCM 11309 / KCTC 3954 / HTE831).